Here is a 520-residue protein sequence, read N- to C-terminus: Cytochrome P450 72A68 (520 aa).

A helical membrane pass occupies residues 11 to 31 (IILITVTFGLVYAWRVLNWMW). C466 contacts heme.

The protein belongs to the cytochrome P450 family. It depends on heme as a cofactor.

Its subcellular location is the membrane. It carries out the reaction oleanolate + 3 reduced [NADPH--hemoprotein reductase] + 3 O2 = gypsogenate + 3 oxidized [NADPH--hemoprotein reductase] + 4 H2O + 4 H(+). Catalyzes the carboxylation of oleanolic acid at the C-23 position to form gypsogenic acid. Involved in the hemolytic saponin biosynthetic pathway. This Medicago truncatula (Barrel medic) protein is Cytochrome P450 72A68.